A 182-amino-acid chain; its full sequence is CDP-diacylglycerol--glycerol-3-phosphate 3-phosphatidyltransferase (182 aa).

The Cytoplasmic segment spans residues 2–12 (QFNIPTLLTLF). Residues 13–37 (RVILIPFFVLVFYLPVTWSPFAAAL) form a helical membrane-spanning segment. Topologically, residues 38–60 (IFCVAAVTDWFDGFLARRWNQST) are periplasmic. The chain crosses the membrane as a helical span at residues 61–81 (RFGAFLDPVADKVLVAIAMVL). Over 82–86 (VTEHY) the chain is Cytoplasmic. The helical transmembrane segment at 87-107 (HSWWVTLPAATMIAREIIISA) threads the bilayer. Topologically, residues 108–145 (LREWMAELGKRSSVAVSWIGKVKTTAQMVALAWLLWRP) are periplasmic. A helical membrane pass occupies residues 146-168 (NIWVEYVGIALFFVAAVLTLWSM). Topologically, residues 169 to 181 (LQYLSAARADLLD) are cytoplasmic.

It belongs to the CDP-alcohol phosphatidyltransferase class-I family.

The protein resides in the cell inner membrane. The enzyme catalyses a CDP-1,2-diacyl-sn-glycerol + sn-glycerol 3-phosphate = a 1,2-diacyl-sn-glycero-3-phospho-(1'-sn-glycero-3'-phosphate) + CMP + H(+). It functions in the pathway phospholipid metabolism; phosphatidylglycerol biosynthesis; phosphatidylglycerol from CDP-diacylglycerol: step 1/2. Catalyzes the conversion of cytidine diphosphate diacylglycerol (CDP-DG) and glycerol 3-phosphate into phosphatidylglycerol. Essential for the synthesis of anionic phospholipids, thereby playing a role in balancing the ratio of zwitterionic and anionic phospholipids, which is thought to be important for normal membrane function. The sequence is that of CDP-diacylglycerol--glycerol-3-phosphate 3-phosphatidyltransferase from Shigella boydii serotype 4 (strain Sb227).